Reading from the N-terminus, the 586-residue chain is Lipoprotein LpqB (586 aa).

Positions 1–17 (MVRSVFALVFAAVLLGG) are cleaved as a signal peptide. C18 carries N-palmitoyl cysteine lipidation. C18 carries the S-diacylglycerol cysteine lipid modification. Residues 26–45 (APQAIGTVERPAPSNLPKPI) form a disordered region.

Belongs to the LpqB lipoprotein family.

It localises to the cell membrane. This chain is Lipoprotein LpqB, found in Mycobacterium ulcerans (strain Agy99).